Consider the following 402-residue polypeptide: Putative RNA-guided DNA endonuclease InsQ (402 aa).

Residues Asp183 and Glu267 contribute to the active site. Zn(2+) contacts are provided by Cys334, Cys337, Cys353, and Cys356. Asp363 is a catalytic residue.

It in the N-terminal section; belongs to the transposase 2 family. The protein in the C-terminal section; belongs to the transposase 35 family.

In terms of biological role, an RNA-guided dsDNA endonuclease. When guided by an RNA derived from the right-end element of its insertion sequence element (IS), cleaves DNA downstream of the transposon-associated motif (TAM). Cleaves supercoiled and linear DNA in a staggered manner 15-21 bases from the TAM yielding 5'-overhangs. Binds reRNA, an approximately 150 nucleotide base sRNA derived from the 3' end of its own gene, the right end (RE) of the insertion sequence (IS) plus sequence downstream of the IS. Not required for transposition of the insertion element. The corresponding transposase in strains MG1655 and W3110 is a truncated pseudogene (yncK). The sequence is that of Putative RNA-guided DNA endonuclease InsQ (insQ) from Escherichia coli (strain K12).